The following is a 604-amino-acid chain: Kelch-like protein 15 (604 aa).

A BTB domain is found at 31-98 (LDVTLVIEDH…MYYGTIELSM (68 aa)). One can recognise a BACK domain in the interval 133–237 (CAEIMRLLDD…TPTSVFEKVK (105 aa)). 5 Kelch repeats span residues 328 to 379 (FVFL…VIGK), 381 to 426 (IYAV…VLNN), 428 to 473 (LFIT…NKSK), 489 to 542 (KLYV…VLDK), and 544 to 590 (IMVL…VCNL).

Homodimer. Dimerization does not affect PPP2R5B-binding, but is required for its proteasomal degradation. Interacts with CUL3. Directly interacts with PPP2R5B; this interaction leads to PPP2R5B proteasomal degradation. Interacts with RBBP8/CtIP; this interaction leads to RBBP8 proteasomal degradation. Interacts with PACMP micropeptide; interaction prevents ubiquitination and degradation of RBBP8/CtIP.

It is found in the nucleus. It participates in protein modification; protein ubiquitination. Functionally, substrate-specific adapter for CUL3 E3 ubiquitin-protein ligase complex. Acts as an adapter for CUL3 to target the serine/threonine-protein phosphatase 2A (PP2A) subunit PPP2R5B for ubiquitination and subsequent proteasomal degradation, thus promoting exchange with other regulatory subunits. Acts as an adapter for CUL3 to target the DNA-end resection factor RBBP8/CtIP for ubiquitination and subsequent proteasomal degradation. Through the regulation of RBBP8/CtIP protein turnover, plays a key role in DNA damage response, favoring DNA double-strand repair through error-prone non-homologous end joining (NHEJ) over error-free, RBBP8-mediated homologous recombination (HR). This is Kelch-like protein 15 (KLHL15) from Homo sapiens (Human).